The sequence spans 303 residues: MADKSKFIDYIDDALEKSKETTLSQLFLTYQGIPYPVTMCTQETFRALDAFEARSDDVLLASYPKCGSNWILHIVSELIFAVSKKKYACPEFPVLECGDAEKYQRMKLFPSPRILTTHLHYDKLPQSIFKNKAKILVIFRNPKDTAVSFFHFHNDVPDIPSYASWDEFFRQFIKGQVSWGSYFDFAINWNKHIDDENVKFILYEDLKENLVVGIKQISEFLGFSLTDEQIETISTQSTFLAMRANSQETHGAIGPFLFRKGEVGDWKRLFNETQNQEMDERFKECLAGTSLGDKLKYEAYCLA.

65-70 (KCGSNW) contributes to the 3'-phosphoadenylyl sulfate binding site. The active-site Proton acceptor is the His-118. 3'-phosphoadenylyl sulfate is bound by residues Arg-140, Ser-148, Tyr-203, 237 to 242 (STFLAM), and 259 to 261 (RKG).

This sequence belongs to the sulfotransferase 1 family. In terms of tissue distribution, expressed in brain, heart, kidney, thymus, lung, liver and testis.

The protein resides in the cytoplasm. It localises to the cytosol. The catalysed reaction is thyroxine + 3'-phosphoadenylyl sulfate = thyroxine sulfate + adenosine 3',5'-bisphosphate + H(+). In terms of biological role, sulfotransferase that utilizes 3'-phospho-5'-adenylyl sulfate (PAPS) as sulfonate donor to catalyze the sulfate conjugation of thyroxine. Involved in the metabolism of thyroxine. This Mus musculus (Mouse) protein is Sulfotransferase 6B1 (Sult6b1).